The chain runs to 121 residues: uncharacterized protein (121 aa).

Helical transmembrane passes span 26 to 46 and 72 to 92; these read FIAL…ILVL and AFLT…WLGL.

Its subcellular location is the membrane. This is an uncharacterized protein from Saccharomyces cerevisiae (strain ATCC 204508 / S288c) (Baker's yeast).